Reading from the N-terminus, the 264-residue chain is Indolethylamine N-methyltransferase (264 aa).

Lysine 14 is subject to N6-succinyllysine. S-adenosyl-L-methionine is bound by residues tyrosine 21, tyrosine 26, 64–65 (GS), tyrosine 70, aspartate 86, and asparagine 91. Lysine 97 carries the post-translational modification N6-succinyllysine. Residues 143 to 144 (DV) and phenylalanine 164 each bind S-adenosyl-L-methionine.

This sequence belongs to the class I-like SAM-binding methyltransferase superfamily. NNMT/PNMT/TEMT family. In terms of assembly, monomer. In terms of tissue distribution, detected in lung and liver (at protein level).

The protein localises to the cytoplasm. It catalyses the reaction a tertiary amine + S-adenosyl-L-methionine = a methylated tertiary amine + S-adenosyl-L-homocysteine + H(+). It carries out the reaction a secondary amine + S-adenosyl-L-methionine = a methylated secondary amine + S-adenosyl-L-homocysteine + H(+). The enzyme catalyses a primary amine + S-adenosyl-L-methionine = a methylated primary amine + S-adenosyl-L-homocysteine + H(+). The catalysed reaction is dimethyl sulfide + S-adenosyl-L-methionine = trimethylsulfonium + S-adenosyl-L-homocysteine. Its activity is regulated as follows. Inhibited by the S-adenosyl-L-methionine analog sinefungin and by the product S-adenosyl-L-homocysteine. Functionally, catalyzes the N-methylation of tryptamine and structurally related compounds. Functions as a thioether S-methyltransferase and is active with a variety of thioethers and the corresponding selenium and tellurium compounds, including 3-methylthiopropionaldehyde, dimethyl selenide, dimethyl telluride, 2-methylthioethylamine, 2-methylthioethanol, methyl-n-propyl sulfide and diethyl sulfide. Plays an important role in the detoxification of selenium compounds. The protein is Indolethylamine N-methyltransferase (Inmt) of Mus musculus (Mouse).